The sequence spans 81 residues: CLAVATA3/ESR (CLE)-related protein 5 (81 aa).

Residues 1–26 (MATLILKQTLIILLIIFSLQTLSSQA) form the signal peptide. Residues P73 and P76 each carry the hydroxyproline modification. Residue P76 is glycosylated (O-linked (Ara...) hydroxyproline).

It belongs to the CLV3/ESR signal peptide family. The O-glycosylation (arabinosylation) of the hydroxyproline Pro-76 enhances binding affinity of the CLE5p peptide for its receptor. Mostly expressed in roots, and, to a lower extent, in seedlings, stems, apex, flowers and siliques.

The protein resides in the secreted. The protein localises to the extracellular space. Functionally, extracellular signal peptide that regulates cell fate. In Arabidopsis thaliana (Mouse-ear cress), this protein is CLAVATA3/ESR (CLE)-related protein 5.